The sequence spans 59 residues: uncharacterized protein (59 aa).

This is an uncharacterized protein from Rickettsia conorii (strain ATCC VR-613 / Malish 7).